The following is a 374-amino-acid chain: Putative F-box/kelch-repeat protein At4g39756 (374 aa).

The F-box domain maps to 17 to 63; it reads CPSFLSLPEEILVNCLARIPKSYYPKLSLVCKSFCSLILSMELYVER. Kelch repeat units lie at residues 135–180, 181–227, 231–278, and 280–308; these read ELYA…VING, KIYV…GMAV, KIYV…RQSC, and WYDT…ILEV.

This is Putative F-box/kelch-repeat protein At4g39756 from Arabidopsis thaliana (Mouse-ear cress).